The following is an 88-amino-acid chain: Large ribosomal subunit protein uL23c (88 aa).

It belongs to the universal ribosomal protein uL23 family. As to quaternary structure, part of the 50S ribosomal subunit.

It is found in the plastid. Its subcellular location is the chloroplast. Binds to 23S rRNA. The protein is Large ribosomal subunit protein uL23c (rpl23) of Spirogyra maxima (Green alga).